The following is a 30-amino-acid chain: GLPCGESCVYIPCISTVLGCSCSNKVCYRD.

The cyclopeptide (Gly-Asp) cross-link spans 1–30 (GLPCGESCVYIPCISTVLGCSCSNKVCYRD). 3 cysteine pairs are disulfide-bonded: C4–C20, C8–C22, and C13–C27.

Post-translationally, this is a cyclic peptide. Detected in stems (at protein level).

Functionally, probably participates in a plant defense mechanism. The protein is Cyclotide hyen-G of Pigea enneasperma (Spade flower).